The following is an 860-amino-acid chain: DNA primase (860 aa).

The segment at 804–842 (CLNRQHRGNRDNVLVYIQLKADGNRLILILWSTCFATKC) adopts a CHC2-type zinc-finger fold.

The protein belongs to the herpesviridae DNA primase family. In terms of assembly, associates with the helicase and the primase-associated factor to form the helicase-primase factor.

The protein localises to the host nucleus. Essential component of the helicase/primase complex. Unwinds the DNA at the replication forks and generates single-stranded DNA for both leading and lagging strand synthesis. The primase initiates primer synthesis and thereby produces large amount of short RNA primers on the lagging strand that the polymerase elongates using dNTPs. In Homo sapiens (Human), this protein is DNA primase (U43).